The primary structure comprises 237 residues: MNNWSQGSTPQGSDPSPYAPELGSLPDGSQSDDHGDTVNKTGTTTIGITTDEGVVIATDMRASLGGRFVSNKNVQKVEQIHPTGALTLVGSVGGAQSFIRTLRAEVNLYESRRGEPMPIEALATLAGNFARGGPFRAINPILGGVDEEGSHVYSIDPAGGVMADDYTVTGSGMQLAYGLLEQEYEEGLSLEEAQSVAARAIESAVERDTGSGNGVFLAAVTGEGVDIQGHNDFDAVI.

Residues 1–14 (MNNWSQGSTPQGSD) show a composition bias toward polar residues. The propeptide at 1 to 42 (MNNWSQGSTPQGSDPSPYAPELGSLPDGSQSDDHGDTVNKTG) is removed in mature form; by autocatalysis. Residues 1 to 45 (MNNWSQGSTPQGSDPSPYAPELGSLPDGSQSDDHGDTVNKTGTTT) form a disordered region. Residue Thr-43 is the Nucleophile of the active site.

Belongs to the peptidase T1B family. The 20S proteasome core is composed of 14 alpha and 14 beta subunits that assemble into four stacked heptameric rings, resulting in a barrel-shaped structure. The two inner rings, each composed of seven catalytic beta subunits, are sandwiched by two outer rings, each composed of seven alpha subunits. The catalytic chamber with the active sites is on the inside of the barrel. Has a gated structure, the ends of the cylinder being occluded by the N-termini of the alpha-subunits. Is capped at one or both ends by the proteasome regulatory ATPase, PAN.

The protein resides in the cytoplasm. It carries out the reaction Cleavage of peptide bonds with very broad specificity.. With respect to regulation, the formation of the proteasomal ATPase PAN-20S proteasome complex, via the docking of the C-termini of PAN into the intersubunit pockets in the alpha-rings, triggers opening of the gate for substrate entry. Interconversion between the open-gate and close-gate conformations leads to a dynamic regulation of the 20S proteasome proteolysis activity. Functionally, component of the proteasome core, a large protease complex with broad specificity involved in protein degradation. The protein is Proteasome subunit beta 2 of Haloterrigena turkmenica (strain ATCC 51198 / DSM 5511 / JCM 9101 / NCIMB 13204 / VKM B-1734 / 4k) (Halococcus turkmenicus).